Consider the following 145-residue polypeptide: U20-hexatoxin-Hi1a (145 aa).

The N-terminal stretch at 1-16 (MYQFLIIVILAAFVNG) is a signal peptide. Thyroglobulin type-1 domains follow at residues 20–73 (KTEC…GQPM) and 82–145 (ACEC…RLEC). Cystine bridges form between C23–C45, C56–C63, C85–C106, C117–C124, and C126–C145.

Expressed by the venom gland.

Its subcellular location is the secreted. In terms of biological role, cysteine proteinase inhibitor. This is U20-hexatoxin-Hi1a from Hadronyche infensa (Fraser island funnel-web spider).